The chain runs to 482 residues: Exodeoxyribonuclease I (482 aa).

An Exonuclease domain is found at 13-194; the sequence is LFYDYETFGI…TSDVYATIEL (182 aa). The Mg(2+) site is built by aspartate 16, glutamate 18, and aspartate 187. Glutamate 18 contributes to the substrate binding site. Positions 203–351 constitute an ExoI SH3-like domain; it reads PKLFDFFFKY…LVKNVLLKKN (149 aa). Positions 355–471 constitute an ExoI C-terminal domain; it reads NSLNVDLQIY…DLLKYVFKKY (117 aa).

Monomer. Interacts with ssb (via C-terminus); this interaction stimulates the exonuclease activity by recruiting the enzyme to its substrate. The cofactor is Mg(2+).

It catalyses the reaction Exonucleolytic cleavage in the 3'- to 5'-direction to yield nucleoside 5'-phosphates.. In terms of biological role, degrades single-stranded DNA (ssDNA) in a highly processive manner. Also functions as a DNA deoxyribophosphodiesterase that releases deoxyribose-phosphate moieties following the cleavage of DNA at an apurinic/apyrimidinic (AP) site by either an AP endonuclease or AP lyase. The sequence is that of Exodeoxyribonuclease I (sbcB) from Buchnera aphidicola subsp. Schizaphis graminum (strain Sg).